Here is a 336-residue protein sequence, read N- to C-terminus: Foldase protein PrsA (336 aa).

The signal sequence occupies residues 1–22 (MKSAKKLLSVLCLGIFILTFTA). Cys-23 carries N-palmitoyl cysteine lipidation. Residue Cys-23 is the site of S-diacylglycerol cysteine attachment. Positions 194-286 (PNTMNVSHIL…WGYHIIKINS (93 aa)) constitute a PpiC domain.

Belongs to the PrsA family.

The protein resides in the cell membrane. It catalyses the reaction [protein]-peptidylproline (omega=180) = [protein]-peptidylproline (omega=0). Plays a major role in protein secretion by helping the post-translocational extracellular folding of several secreted proteins. This chain is Foldase protein PrsA, found in Clostridium botulinum (strain Langeland / NCTC 10281 / Type F).